The chain runs to 622 residues: MPIRILPPILANQIAAGEVVERPSSVVKELVENSLDAGADRVEIDIDKGGAKLIRIRDNGSGVAKDELVLALSRHATSKVATLDDLEGINSLGFRGEALASISSVSRLTFTSRTAEQSEAWQAQAEGREMSVTIKPAAHPVGTTVEVVDLFFNTPARRKFMRSEKTEFAHIDELVRRIALSRFDVTLILRHNGKVVRQYKAANTVAEQERRLAAVCGSPFMHYALAVESEHSDVRLWGWLATPEGARPQNDLQYTYVNGRMMRDKLINHAIRQAYDELLPADRFAAYVLYIELDPRQVDVNVHPAKHEVRFHQARLIHDFIFQALFTALRQQGAASDEPLAETLVELPVSAPIEYPGQAPRAEWYGAEHNYRAPAREVREGSSTGRAGNYQPPEPPSREAMRGMGSLLTTLPAVQGTPLAEAETAPVAAAVPAKAGAWRALTLVEQAYLLLERDNRLALLSLVRAERLLLRHWLLETWGQGLAAQPLLLPVSFKLPKNLVALVEQQDRLLKRMGLELKSGGRDTMILTRVPALLRQTDLVRLLPELLQLIESGSDSDAGQQAEVLCQWLVEQGISREKVYDFATANRLLTELVADFSDQLANVRMVRPLALASVLAEFADGH.

The segment at 376 to 401 (REVREGSSTGRAGNYQPPEPPSREAM) is disordered.

Belongs to the DNA mismatch repair MutL/HexB family.

This protein is involved in the repair of mismatches in DNA. It is required for dam-dependent methyl-directed DNA mismatch repair. May act as a 'molecular matchmaker', a protein that promotes the formation of a stable complex between two or more DNA-binding proteins in an ATP-dependent manner without itself being part of a final effector complex. The sequence is that of DNA mismatch repair protein MutL from Aeromonas hydrophila subsp. hydrophila (strain ATCC 7966 / DSM 30187 / BCRC 13018 / CCUG 14551 / JCM 1027 / KCTC 2358 / NCIMB 9240 / NCTC 8049).